A 1046-amino-acid polypeptide reads, in one-letter code: Multidrug resistance protein MexB (1046 aa).

The Cytoplasmic segment spans residues 1–9 (MSKFFIDRP). The helical transmembrane segment at 10–28 (IFAWVIALVIMLAGGLSIL) threads the bilayer. The Periplasmic segment spans residues 29–339 (SLPVNQYPAI…TPVVSASIHE (311 aa)). A helical transmembrane segment spans residues 340 to 359 (VVKTLGEAILLVFLVMYLFL). At 360–365 (QNFRAT) the chain is on the cytoplasmic side. A helical transmembrane segment spans residues 366–385 (LIPTIAVPVVLLGTFGVLAA). Residues 386-391 (FGFSIN) lie on the Periplasmic side of the membrane. Residues 392–413 (TLTMFGMVLAIGLLVDDAIVVV) form a helical membrane-spanning segment. At 414-441 (ENVERVMAEEGLSPREAARKSMGQIQGA) the chain is on the cytoplasmic side. A helical membrane pass occupies residues 442–460 (LVGIAMVLSAVFLPMAFFG). Topologically, residues 461 to 473 (GSTGVIYRQFSIT) are periplasmic. The helical transmembrane segment at 474-496 (IVSAMALSVIVALILTPALCATM) threads the bilayer. Topologically, residues 497-538 (LKPIEKGDHGEHKGGFFGWFNRMFLSTTHGYERGVASILKHR) are cytoplasmic. The helical transmembrane segment at 539-557 (APYLLIYVVIVAGMIWMFT) threads the bilayer. The Periplasmic segment spans residues 558–871 (RIPTAFLPDE…SYEERLSGSQ (314 aa)). A helical transmembrane segment spans residues 872-891 (APALYALSLLVVFLCLAALY). The Cytoplasmic segment spans residues 892–897 (ESWSIP). The helical transmembrane segment at 898-917 (FSVMLVVPLGVIGALLATSM) threads the bilayer. Over 918–923 (RGLSND) the chain is Periplasmic. Residues 924-945 (VFFQVGLLTTIGLSAKNAILIV) traverse the membrane as a helical segment. The Cytoplasmic segment spans residues 946-972 (EFAKELHEQGKGIVEAAIEACRMRLRP). Residues 973–991 (IVMTSLAFILGVVPLAIST) form a helical membrane-spanning segment. The Periplasmic segment spans residues 992–1004 (GAGSGSQHAIGTG). The chain crosses the membrane as a helical span at residues 1005–1027 (VIGGMVTATVLAIFWVPLFYVAV). Over 1028 to 1046 (STLFKDEASKQQASVEKGQ) the chain is Cytoplasmic.

This sequence belongs to the resistance-nodulation-cell division (RND) (TC 2.A.6) family. In terms of assembly, component of the MexAB-OprM multidrug efflux complex, composed of six MexA subunits forming a hexameric tube, binding to a MexB trimer, which interact with the trimeric OprM outer membrane channel protein. OprM is thought to not directly contact MexB; instead, MexA joins MexB and OprM by forming a funnel-like hexamer anchored to the inner membrane. MexA may initially form a hexameric ring complex with MexB prior to OprM, then OprM undergoes a conformational change as it contacts MexA, allowing the periplasmic gate to open. It is thought that, under high intracellular substrate concentration, MexB ejects substrate into the tunnel formed by MexA-OprM; as the substrate level declines, conformational changes in MexB cause efflux to reduce and stop and the complex shifts to the closed state. Acts as a substrate:proton antiporter and activity is enhanced significantly when in complex with MexA and OprM, in vitro.

It localises to the cell inner membrane. Export of antibiotics and solvents is dramatically decreased in the presence of the protonophore carbonyl cyanide m-chlorophenylhydrazone (CCCP), therefore may be driven by a proton gradient. Antibiotic efflux is inhibited by pyridopyrimidine derivatives, such as ABI-PP, acting by binding to a hydrophobic pocket in MexB. Functionally, the inner membrane transporter component of the MexAB-OprM efflux system that confers multidrug resistance. Functions as the major efflux pump for n-hexane and p-xylene efflux. Has been shown in one study to be involved in the active efflux of the autoinducer N-(3-oxododecanoyl) homoserine lactone, thereby playing an indirect role in quorum-sensing; but has been shown in another study not to be involved in efflux of this autoinducer. Over-expression of the pump increases antibiotic and solvent efflux capacities. Implicated in the secretion of the siderophore pyoverdine. The chain is Multidrug resistance protein MexB (mexB) from Pseudomonas aeruginosa (strain ATCC 15692 / DSM 22644 / CIP 104116 / JCM 14847 / LMG 12228 / 1C / PRS 101 / PAO1).